The sequence spans 405 residues: Mevalonate 3,5-bisphosphate decarboxylase (405 aa).

This sequence belongs to the mevalonate 3,5-bisphosphate decarboxylase family. Homodimer.

The enzyme catalyses (R)-3,5-bisphosphomevalonate + H(+) = isopentenyl phosphate + phosphate + CO2. The protein operates within isoprenoid biosynthesis; isopentenyl diphosphate biosynthesis via mevalonate pathway. Its function is as follows. Catalyzes the ATP-independent decarboxylation of (R)-mevalonate 3,5-bisphosphate to isopentenyl phosphate. Functions in an alternative mevalonate pathway, only present in extreme acidophiles of the Thermoplasmatales order, which passes through mevalonate 3-phosphate rather than mevalonate 5-phosphate. The polypeptide is Mevalonate 3,5-bisphosphate decarboxylase (Thermoplasma acidophilum (strain ATCC 25905 / DSM 1728 / JCM 9062 / NBRC 15155 / AMRC-C165)).